We begin with the raw amino-acid sequence, 81 residues long: MTSSSKCLFFVFLCLAALLTPYLAEAEDRSKLIPIGPCSKIANCNQTCIESQFLGGKCIKWYPDSIKETCACLVKPSITHV.

The N-terminal stretch at 1–26 (MTSSSKCLFFVFLCLAALLTPYLAEA) is a signal peptide. 3 disulfides stabilise this stretch: cysteine 38-cysteine 58, cysteine 44-cysteine 70, and cysteine 48-cysteine 72.

The protein belongs to the DEFL family.

It localises to the secreted. This is Putative defensin-like protein 31 from Arabidopsis thaliana (Mouse-ear cress).